The following is a 604-amino-acid chain: Asparagine synthetase [glutamine-hydrolyzing] 1 (604 aa).

Cysteine 2 serves as the catalytic Nucleophile. Residues 2–186 form the Glutamine amidotransferase type-2 domain; that stretch reads CGILAVLGAA…PGHLYSSAAG (185 aa). Residues 50–54, 75–77, and aspartate 99 contribute to the L-glutamine site; these read RLAIV and NGE. An Asparagine synthetase domain is found at 211 to 451; it reads LREAFEKAVI…LPKHILYRQK (241 aa). Residues leucine 232, valine 268, and 342–343 contribute to the ATP site; that span reads SG.

The enzyme catalyses L-aspartate + L-glutamine + ATP + H2O = L-asparagine + L-glutamate + AMP + diphosphate + H(+). It functions in the pathway amino-acid biosynthesis; L-asparagine biosynthesis. Essential for nitrogen assimilation, distribution and remobilization within the plant via the phloem. The polypeptide is Asparagine synthetase [glutamine-hydrolyzing] 1 (Oryza sativa subsp. japonica (Rice)).